The sequence spans 361 residues: 3-dehydroquinate synthase (361 aa).

Residues 72–77 (SGEKEK), 130–131 (TT), K142, and K151 each bind NAD(+). Residues E184, H247, and H264 each contribute to the Zn(2+) site.

This sequence belongs to the sugar phosphate cyclases superfamily. Dehydroquinate synthase family. Co(2+) serves as cofactor. The cofactor is Zn(2+). It depends on NAD(+) as a cofactor.

The protein resides in the cytoplasm. It catalyses the reaction 7-phospho-2-dehydro-3-deoxy-D-arabino-heptonate = 3-dehydroquinate + phosphate. The protein operates within metabolic intermediate biosynthesis; chorismate biosynthesis; chorismate from D-erythrose 4-phosphate and phosphoenolpyruvate: step 2/7. Functionally, catalyzes the conversion of 3-deoxy-D-arabino-heptulosonate 7-phosphate (DAHP) to dehydroquinate (DHQ). The polypeptide is 3-dehydroquinate synthase (Bacillus cereus (strain AH820)).